The sequence spans 416 residues: MFSKSVTLAQYDPDLAAAIAQEDQRQQDHVELIASENYVSCAVMDAQGSQLTNKYAEGYPGKRYYGGCEYVDIVEQLAIDRVKELFGAAYANVQPHSGSQANQAVYASVLKPGDTILGMSLAHGGHLTHGASVNISGKLYNAVTYGLDENEVLDYAEVERLALEHKPKMIVAGASAYALQIDWAKFREIADKVGAYLFVDMAHYAGLVAGGEYPNPVPFCDFVTTTTHKTLRGPRGGVILCRDNTHEKALNSSIFPSLQGGPLMHVIAAKAVAFKEALQPEFKQYAKQVKINAAAMAEELVKRGLRIVSGRTESHVFLVDLQPMKITGKAAEAALGKAHITVNKNAIPNDPEKPFVTSGIRIGSAAMTTRGFNEADARVLANLVADVLSNPEDEANLAKVRKQVTALCNKYPVYGA.

Residues leucine 121 and 125–127 (GHL) contribute to the (6S)-5,6,7,8-tetrahydrofolate site. The residue at position 229 (lysine 229) is an N6-(pyridoxal phosphate)lysine.

The protein belongs to the SHMT family. As to quaternary structure, homodimer. The cofactor is pyridoxal 5'-phosphate.

It is found in the cytoplasm. The catalysed reaction is (6R)-5,10-methylene-5,6,7,8-tetrahydrofolate + glycine + H2O = (6S)-5,6,7,8-tetrahydrofolate + L-serine. It participates in one-carbon metabolism; tetrahydrofolate interconversion. Its pathway is amino-acid biosynthesis; glycine biosynthesis; glycine from L-serine: step 1/1. Functionally, catalyzes the reversible interconversion of serine and glycine with tetrahydrofolate (THF) serving as the one-carbon carrier. This reaction serves as the major source of one-carbon groups required for the biosynthesis of purines, thymidylate, methionine, and other important biomolecules. Also exhibits THF-independent aldolase activity toward beta-hydroxyamino acids, producing glycine and aldehydes, via a retro-aldol mechanism. This Neisseria meningitidis serogroup B (strain ATCC BAA-335 / MC58) protein is Serine hydroxymethyltransferase.